A 347-amino-acid polypeptide reads, in one-letter code: MGENMEREMLRPKTIAMDQNSASARSNPEREIKTGRLEPASNSAPTMAIDLQAVTMIYRDKTVVDSLSFGVRAGECFGLLGPNGAGKSTITRMLLGMATPSAGKISVLGLPVPGKARLARASIGVVSQFDNLDMEFTVRENLLVFGRYFQMSTRAIEKLIPSLLEFAQLEAKADVRVSDLSGGMKRRLTLARALVNDPQLLILDEPTTGLDPPARHQIWERLRSLLIRGKTILLTTHMMDEAERMCDRLCVLEGGRMIAEGPPLSLIEDIIGCPVIEVYGGNPDELSLIVRPHVDRIETSGETLFCYTVNSDQVRAKLREFPSLRLLERPANLEDVFLRLTGREMEK.

Residues 1-11 (MGENMEREMLR) show a composition bias toward basic and acidic residues. A disordered region spans residues 1 to 32 (MGENMEREMLRPKTIAMDQNSASARSNPEREI). The span at 17–26 (MDQNSASARS) shows a compositional bias: polar residues. The ABC transporter domain maps to 49-279 (IDLQAVTMIY…IIGCPVIEVY (231 aa)). 81–88 (GPNGAGKS) lines the ATP pocket.

This sequence belongs to the ABC transporter superfamily. Lipooligosaccharide exporter (TC 3.A.1.102) family. In terms of assembly, the complex is composed of two ATP-binding proteins (NodI) and two transmembrane proteins (NodJ).

Its subcellular location is the cell inner membrane. Functionally, part of the ABC transporter complex NodIJ involved in the export of the nodulation factors (Nod factors), the bacterial signal molecules that induce symbiosis and subsequent nodulation induction. Nod factors are LCO (lipo-chitin oligosaccharide), a modified beta-1,4-linked N-acetylglucosamine oligosaccharide. This subunit is responsible for energy coupling to the transport system. The protein is Nod factor export ATP-binding protein I of Neorhizobium galegae (Rhizobium galegae).